Reading from the N-terminus, the 146-residue chain is 16.0 kDa heat shock protein, peroxisomal (146 aa).

Positions 23–143 (WASASATAAM…RPRTRPIAVS (121 aa)) constitute a sHSP domain. The short motif at 144–146 (SKL) is the Microbody targeting signal element.

Belongs to the small heat shock protein (HSP20) family. May form oligomeric structures.

Its subcellular location is the peroxisome. The chain is 16.0 kDa heat shock protein, peroxisomal (HSP16.0) from Oryza sativa subsp. japonica (Rice).